The primary structure comprises 90 residues: Small ribosomal subunit protein uS15 (90 aa).

It belongs to the universal ribosomal protein uS15 family. Part of the 30S ribosomal subunit. Forms a bridge to the 50S subunit in the 70S ribosome, contacting the 23S rRNA.

Its function is as follows. One of the primary rRNA binding proteins, it binds directly to 16S rRNA where it helps nucleate assembly of the platform of the 30S subunit by binding and bridging several RNA helices of the 16S rRNA. Functionally, forms an intersubunit bridge (bridge B4) with the 23S rRNA of the 50S subunit in the ribosome. This is Small ribosomal subunit protein uS15 from Wolbachia pipientis subsp. Culex pipiens (strain wPip).